The following is a 124-amino-acid chain: Large ribosomal subunit protein bL17 (124 aa).

The protein belongs to the bacterial ribosomal protein bL17 family. As to quaternary structure, part of the 50S ribosomal subunit. Contacts protein L32.

This is Large ribosomal subunit protein bL17 from Mycoplasma pneumoniae (strain ATCC 29342 / M129 / Subtype 1) (Mycoplasmoides pneumoniae).